Consider the following 192-residue polypeptide: Amelogenin, Y isoform (192 aa).

The first 16 residues, 1-16, serve as a signal peptide directing secretion; the sequence is MGTWILFACLLGAAYS. A disordered region spans residues 73 to 192; the sequence is QSPQNHALQP…TDKTKREEVD (120 aa). The segment covering 87–105 has biased composition (low complexity); it reads PMVPAQQPVVPQQPMMPVP. Residues 108 to 117 are compositionally biased toward polar residues; sequence HSMTPIQHHQ. Residues 132-173 are compositionally biased toward pro residues; it reads PIQPQPHQPLQPQPPVHPIQRLPPQPPLPPIFPMQPLPPVLP.

The protein belongs to the amelogenin family.

It localises to the secreted. The protein localises to the extracellular space. It is found in the extracellular matrix. Its function is as follows. Plays a role in the biomineralization of teeth. Seems to regulate the formation of crystallites during the secretory stage of tooth enamel development. Thought to play a major role in the structural organization and mineralization of developing enamel. This Bos taurus (Bovine) protein is Amelogenin, Y isoform (AMELY).